Reading from the N-terminus, the 505-residue chain is Alpha-1-syntrophin (505 aa).

2 disordered regions span residues 1–25 (MASG…GAGG) and 40–77 (LTVS…PPQL). PH domains lie at 6 to 269 (RAPR…AQVN) and 293 to 401 (DIKQ…DGCH). One can recognise a PDZ domain in the interval 87–170 (RVTVRKADAG…EVVLEVKYMK (84 aa)). A phosphoserine mark is found at S101, S184, S189, S193, and S200. The segment at 180 to 210 (TGGTSVGWDSPPASPLQRQPSSPGPTPRNFS) is disordered. An SU domain is found at 449–505 (PFEKLQMSSDDGASLLFLDFGGAEGEIQLDLHSCPKTIVFIIHSFLSAKVTRLGLLA). The interval 483–505 (PKTIVFIIHSFLSAKVTRLGLLA) is calmodulin-binding.

It belongs to the syntrophin family. As to quaternary structure, monomer and homodimer. Interacts with the other members of the syntrophin family SNTB1 and SNTB2; SGCG and SGCA of the dystrophin glycoprotein complex; NOS1; GRB2; the sodium channel proteins SCN4A and SCN5A; F-actin and calmodulin. Interacts with dystrophin protein DMD and related proteins DTNA and UTRN and with MAPK12, TGFA and GA. Interacts with MYOC; regulates muscle hypertrophy. Interacts with DTNB. Phosphorylated by CaM-kinase II. Phosphorylation may inhibit the interaction with DMD. As to expression, high expression in skeletal muscle and heart. Low expression in brain, pancreas, liver, kidney and lung. Not detected in placenta.

The protein resides in the cell membrane. It localises to the sarcolemma. Its subcellular location is the cell junction. The protein localises to the cytoplasm. It is found in the cytoskeleton. Adapter protein that binds to and probably organizes the subcellular localization of a variety of membrane proteins. May link various receptors to the actin cytoskeleton and the extracellular matrix via the dystrophin glycoprotein complex. Plays an important role in synapse formation and in the organization of UTRN and acetylcholine receptors at the neuromuscular synapse. Binds to phosphatidylinositol 4,5-bisphosphate. This chain is Alpha-1-syntrophin (SNTA1), found in Homo sapiens (Human).